The primary structure comprises 38 residues: Large ribosomal subunit protein bL36 (38 aa).

The protein belongs to the bacterial ribosomal protein bL36 family.

In Methylacidiphilum infernorum (isolate V4) (Methylokorus infernorum (strain V4)), this protein is Large ribosomal subunit protein bL36.